The sequence spans 248 residues: DNA repair protein RecO (248 aa).

This sequence belongs to the RecO family.

In terms of biological role, involved in DNA repair and RecF pathway recombination. This chain is DNA repair protein RecO, found in Bacillus cereus (strain B4264).